The primary structure comprises 396 residues: tRNA-specific 2-thiouridylase MnmA (396 aa).

ATP contacts are provided by residues 42-49 and methionine 68; that span reads GMSGGVDS. The tract at residues 128–130 is interaction with target base in tRNA; the sequence is NPD. The Nucleophile role is filled by cysteine 133. Cysteine 133 and cysteine 230 are disulfide-bonded. Glycine 158 provides a ligand contact to ATP. An interaction with tRNA region spans residues 180 to 182; sequence KDQ. Cysteine 230 serves as the catalytic Cysteine persulfide intermediate. Residues 342–343 form an interaction with tRNA region; it reads RY.

Belongs to the MnmA/TRMU family.

It is found in the cytoplasm. The catalysed reaction is S-sulfanyl-L-cysteinyl-[protein] + uridine(34) in tRNA + AH2 + ATP = 2-thiouridine(34) in tRNA + L-cysteinyl-[protein] + A + AMP + diphosphate + H(+). Its function is as follows. Catalyzes the 2-thiolation of uridine at the wobble position (U34) of tRNA, leading to the formation of s(2)U34. The protein is tRNA-specific 2-thiouridylase MnmA of Pseudoalteromonas atlantica (strain T6c / ATCC BAA-1087).